Reading from the N-terminus, the 76-residue chain is U10-ctenitoxin-Pn1a (76 aa).

The first 15 residues, 1 to 15 (SFVFYLFTLITVVRA), serve as a signal peptide directing secretion. Residues 16-36 (EEFILENEAEDIAPAVHGESG) constitute a propeptide that is removed on maturation. 4 cysteine pairs are disulfide-bonded: Cys-39/Cys-54, Cys-46/Cys-59, Cys-53/Cys-73, and Cys-61/Cys-71.

It belongs to the neurotoxin 02 (plectoxin) family. 09 subfamily. As to expression, expressed by the venom gland.

The protein resides in the secreted. In Phoneutria nigriventer (Brazilian armed spider), this protein is U10-ctenitoxin-Pn1a.